Consider the following 141-residue polypeptide: Large ribosomal subunit protein uL11 (141 aa).

It belongs to the universal ribosomal protein uL11 family. As to quaternary structure, part of the ribosomal stalk of the 50S ribosomal subunit. Interacts with L10 and the large rRNA to form the base of the stalk. L10 forms an elongated spine to which L12 dimers bind in a sequential fashion forming a multimeric L10(L12)X complex. One or more lysine residues are methylated.

In terms of biological role, forms part of the ribosomal stalk which helps the ribosome interact with GTP-bound translation factors. This chain is Large ribosomal subunit protein uL11, found in Prochlorococcus marinus (strain MIT 9215).